The primary structure comprises 606 residues: DNA mismatch repair protein MutL (606 aa).

Residues 340–366 (MNAFRPGYSPSGLRPSPSATWSAATSP) form a disordered region. The span at 353-366 (RPSPSATWSAATSP) shows a compositional bias: low complexity.

This sequence belongs to the DNA mismatch repair MutL/HexB family.

In terms of biological role, this protein is involved in the repair of mismatches in DNA. It is required for dam-dependent methyl-directed DNA mismatch repair. May act as a 'molecular matchmaker', a protein that promotes the formation of a stable complex between two or more DNA-binding proteins in an ATP-dependent manner without itself being part of a final effector complex. The chain is DNA mismatch repair protein MutL from Agrobacterium fabrum (strain C58 / ATCC 33970) (Agrobacterium tumefaciens (strain C58)).